The following is a 424-amino-acid chain: Mitogen-activated protein kinase mpkA (424 aa).

The region spanning 23 to 314 is the Protein kinase domain; the sequence is YNVTKELGQG…VEEALEHPYL (292 aa). Residues 29–37 and K52 contribute to the ATP site; that span reads LGQGAYGIV. The disordered stretch occupies residues 375–424; the sequence is QQIAQQTNVPIPDHQQGGWKQEEPKPQEVHAAGGHVNDLESSLQRGMDVQ.

It belongs to the protein kinase superfamily. Ser/Thr protein kinase family. In terms of assembly, interacts with flbB, flbC, brlA, and rasB. Interacts with fmqA and fmqC. Interacts with hsp90. It depends on Mg(2+) as a cofactor. Post-translationally, phosphorylated by the upstreamm MAPKK mkk2. Phosphorylation is induced during asexual development. Phosphorylation is regulated by rlmA.

The enzyme catalyses L-seryl-[protein] + ATP = O-phospho-L-seryl-[protein] + ADP + H(+). It carries out the reaction L-threonyl-[protein] + ATP = O-phospho-L-threonyl-[protein] + ADP + H(+). Activated by threonine and tyrosine phosphorylation by the upstreamm MAPKK mkk2. Its function is as follows. Mitogen-activated protein kinase; part of cell wall integrity (CWI) signaling pathway composed of pkcA, the bck1-mkk2-mpka MAPK cascade and the downstream rlmA transcription regulator. The CWI signaling pathway regulates cell wall integrity and pyomelanin formation. CWI also controls oxidative stress response, gliotoxin production, iron adaptation and asexual development. Finally, CWI is constitutively required for A.fumigatus to cope with the temperature increase found in the mammalian lung environment, during infection. MpkA positively modulates the expression of fumiquinazoline cluster during conidiogenesis and directly phosphorylates fmqC, and perhaps also fmqA. This chain is Mitogen-activated protein kinase mpkA, found in Aspergillus fumigatus (strain ATCC MYA-4609 / CBS 101355 / FGSC A1100 / Af293) (Neosartorya fumigata).